Reading from the N-terminus, the 207-residue chain is Outer-membrane lipoprotein LolB (207 aa).

The signal sequence occupies residues 1 to 23 (MINLRRFTKFTLAGLTALSLLGG). Cys-24 is lipidated: N-palmitoyl cysteine. Cys-24 is lipidated: S-diacylglycerol cysteine.

This sequence belongs to the LolB family. As to quaternary structure, monomer.

Its subcellular location is the cell outer membrane. Functionally, plays a critical role in the incorporation of lipoproteins in the outer membrane after they are released by the LolA protein. This is Outer-membrane lipoprotein LolB from Shewanella amazonensis (strain ATCC BAA-1098 / SB2B).